The chain runs to 124 residues: Small ribosomal subunit protein uS12 (124 aa).

Residues 1-20 (MATISQLVRNPRKDKVQKTS) are disordered. The residue at position 89 (Asp-89) is a 3-methylthioaspartic acid. Positions 104–124 (TSGVTARRKGRSKYGAKRPKA) are disordered. Residues 109–124 (ARRKGRSKYGAKRPKA) are compositionally biased toward basic residues.

The protein belongs to the universal ribosomal protein uS12 family. As to quaternary structure, part of the 30S ribosomal subunit. Contacts proteins S8 and S17. May interact with IF1 in the 30S initiation complex.

Its function is as follows. With S4 and S5 plays an important role in translational accuracy. Interacts with and stabilizes bases of the 16S rRNA that are involved in tRNA selection in the A site and with the mRNA backbone. Located at the interface of the 30S and 50S subunits, it traverses the body of the 30S subunit contacting proteins on the other side and probably holding the rRNA structure together. The combined cluster of proteins S8, S12 and S17 appears to hold together the shoulder and platform of the 30S subunit. The sequence is that of Small ribosomal subunit protein uS12 from Psychromonas ingrahamii (strain DSM 17664 / CCUG 51855 / 37).